The primary structure comprises 119 residues: Large ribosomal subunit protein bL19 (119 aa).

It belongs to the bacterial ribosomal protein bL19 family.

In terms of biological role, this protein is located at the 30S-50S ribosomal subunit interface and may play a role in the structure and function of the aminoacyl-tRNA binding site. The protein is Large ribosomal subunit protein bL19 of Pelobacter propionicus (strain DSM 2379 / NBRC 103807 / OttBd1).